A 512-amino-acid polypeptide reads, in one-letter code: GMP synthase [glutamine-hydrolyzing] (512 aa).

In terms of domain architecture, Glutamine amidotransferase type-1 spans 3–196 (NILILDFGSQ…VKHICQTSET (194 aa)). Cys80 serves as the catalytic Nucleophile. Residues His169 and Glu171 contribute to the active site. The region spanning 197-387 (WKIETIEKQL…LGLPDVLISR (191 aa)) is the GMPS ATP-PPase domain. 225–231 (SGGVDSS) serves as a coordination point for ATP.

Homodimer.

It carries out the reaction XMP + L-glutamine + ATP + H2O = GMP + L-glutamate + AMP + diphosphate + 2 H(+). It functions in the pathway purine metabolism; GMP biosynthesis; GMP from XMP (L-Gln route): step 1/1. In terms of biological role, catalyzes the synthesis of GMP from XMP. This is GMP synthase [glutamine-hydrolyzing] (guaA) from Chlamydia muridarum (strain MoPn / Nigg).